Consider the following 1499-residue polypeptide: DNA-directed RNA polymerase subunit beta' (1499 aa).

4 residues coordinate Zn(2+): cysteine 67, cysteine 69, cysteine 82, and cysteine 85. Mg(2+)-binding residues include aspartate 499, aspartate 501, and aspartate 503. Zn(2+) is bound by residues cysteine 867, cysteine 943, cysteine 950, and cysteine 953.

This sequence belongs to the RNA polymerase beta' chain family. As to quaternary structure, the RNAP catalytic core consists of 2 alpha, 1 beta, 1 beta' and 1 omega subunit. When a sigma factor is associated with the core the holoenzyme is formed, which can initiate transcription. Requires Mg(2+) as cofactor. The cofactor is Zn(2+).

It catalyses the reaction RNA(n) + a ribonucleoside 5'-triphosphate = RNA(n+1) + diphosphate. Functionally, DNA-dependent RNA polymerase catalyzes the transcription of DNA into RNA using the four ribonucleoside triphosphates as substrates. This is DNA-directed RNA polymerase subunit beta' from Prosthecochloris aestuarii (strain DSM 271 / SK 413).